Consider the following 390-residue polypeptide: Na(+)/H(+) antiporter NhaA (390 aa).

Transmembrane regions (helical) follow at residues 13 to 33 (FQLEAASGLVLLIAAIIALVI), 61 to 81 (LSVHHWINDLLMAIFFFFVTL), 99 to 119 (LLPIIGAVGGMVVPALVYVFI), 129 to 149 (GWAIPSATDIAFSLGILSLLG), 158 to 178 (VFLTALAIIDDLGAILIIAFF), 181 to 201 (GDLSISYLSLILISYILLLTL), 209 to 229 (FIPYLIIGAFMWFFTYKSGIH), 259 to 279 (AISPYVAFIIMPIFAFANAGV), 297 to 317 (ILLGLFVGKQVGVMVVSFIAV), 330 to 350 (WLSLYGVSILTGVGFTMSLFV), and 367 to 387 (IGVLAGSLLSTVFGYFILLYA).

Belongs to the NhaA Na(+)/H(+) (TC 2.A.33) antiporter family.

The protein resides in the cell inner membrane. It catalyses the reaction Na(+)(in) + 2 H(+)(out) = Na(+)(out) + 2 H(+)(in). Its function is as follows. Na(+)/H(+) antiporter that extrudes sodium in exchange for external protons. This Pelagibacter ubique (strain HTCC1062) protein is Na(+)/H(+) antiporter NhaA.